Reading from the N-terminus, the 142-residue chain is Hemoglobin subunit alpha-A (142 aa).

Residues 2–142 (VLSANDKTNV…VGNVLTAKYR (141 aa)) form the Globin domain. H59 is an O2 binding site. Residue H88 participates in heme b binding.

It belongs to the globin family. In terms of assembly, heterotetramer of two alpha chains and two beta chains. Red blood cells.

In terms of biological role, involved in oxygen transport from the lung to the various peripheral tissues. This is Hemoglobin subunit alpha-A (HBAA) from Accipiter gentilis (Northern goshawk).